Reading from the N-terminus, the 253-residue chain is Major prion protein (253 aa).

An N-terminal signal peptide occupies residues 1–22 (MANLGCWMLVLFVATWSDLGLC). Residues 23–38 (KKRPKPGGWNTGGSRY) are interaction with ADGRG6. The interaction with GRB2, ERI3 and SYN1 stretch occupies residues 23-230 (KKRPKPGGWN…ESQAYYQRGS (208 aa)). A disordered region spans residues 26-108 (PKPGGWNTGG…WNKPSKPKTS (83 aa)). Tandem repeats lie at residues 51-59 (PQGGGGWGQ), 60-67 (PHGGGWGQ), 68-75 (PHGGGWGQ), 76-83 (PHGGGWGQ), and 84-91 (PHGGGWGQ). The tract at residues 51 to 91 (PQGGGGWGQPHGGGWGQPHGGGWGQPHGGGWGQPHGGGWGQ) is 5 X 8 AA tandem repeats of P-H-G-G-G-W-G-Q. The span at 52-95 (QGGGGWGQPHGGGWGQPHGGGWGQPHGGGWGQPHGGGWGQGGGT) shows a compositional bias: gly residues. Cu(2+) contacts are provided by His-61, Gly-62, Gly-63, His-69, Gly-70, Gly-71, His-77, Gly-78, Gly-79, His-85, Gly-86, and Gly-87. An intrachain disulfide couples Cys-179 to Cys-214. N-linked (GlcNAc...) asparagine glycans are attached at residues Asn-181 and Asn-197. The GPI-anchor amidated serine moiety is linked to residue Ser-230. The propeptide at 231–253 (SMVLFSSPPVILLISFLIFLIVG) is removed in mature form.

This sequence belongs to the prion family. In terms of assembly, monomer and homodimer. Has a tendency to aggregate into amyloid fibrils containing a cross-beta spine, formed by a steric zipper of superposed beta-strands. Soluble oligomers may represent an intermediate stage on the path to fibril formation. Copper binding may promote oligomerization. Interacts with GRB2, APP, ERI3/PRNPIP and SYN1. Mislocalized cytosolically exposed PrP interacts with MGRN1; this interaction alters MGRN1 subcellular location and causes lysosomal enlargement. Interacts with APP. Interacts with KIAA1191. Interacts with ADGRG6.

The protein localises to the cell membrane. It localises to the golgi apparatus. Functionally, its primary physiological function is unclear. May play a role in neuronal development and synaptic plasticity. May be required for neuronal myelin sheath maintenance. May promote myelin homeostasis through acting as an agonist for ADGRG6 receptor. May play a role in iron uptake and iron homeostasis. Soluble oligomers are toxic to cultured neuroblastoma cells and induce apoptosis (in vitro). Association with GPC1 (via its heparan sulfate chains) targets PRNP to lipid rafts. Also provides Cu(2+) or Zn(2+) for the ascorbate-mediated GPC1 deaminase degradation of its heparan sulfate side chains. This chain is Major prion protein (PRNP), found in Colobus guereza (Mantled guereza).